We begin with the raw amino-acid sequence, 274 residues long: MPELPEVKTVILHLKKLILDKTISKIEIFIPKMIKEISSEEFKKYLENETIFNIENEGKFIVFFLSNNKIMLSHLRMEGGYNFYSKKRQKEIHDRLIFHFTDGSSLHYHDSRMFGTFHFRNSENYLKIKPLSLVAPVPWKIDLDEFFKLLKRKKTAIKKILLDQQIIAGLGNIYVDETLFASKVHPEFKANQLSLEQVKLILKNATRILQESTKLGGSSIRSYTSLNEKEGSFQNFLQVHTKFNKPCPNCGELIQKIKLGGRGTYFCKKCQQLN.

Catalysis depends on Pro2, which acts as the Schiff-base intermediate with DNA. The active-site Proton donor is the Glu3. Lys59 acts as the Proton donor; for beta-elimination activity in catalysis. Positions 93, 112, and 153 each coordinate DNA. The FPG-type zinc-finger motif lies at 238-272; the sequence is QVHTKFNKPCPNCGELIQKIKLGGRGTYFCKKCQQ. Catalysis depends on Arg262, which acts as the Proton donor; for delta-elimination activity.

Belongs to the FPG family. As to quaternary structure, monomer. Zn(2+) is required as a cofactor.

The catalysed reaction is Hydrolysis of DNA containing ring-opened 7-methylguanine residues, releasing 2,6-diamino-4-hydroxy-5-(N-methyl)formamidopyrimidine.. The enzyme catalyses 2'-deoxyribonucleotide-(2'-deoxyribose 5'-phosphate)-2'-deoxyribonucleotide-DNA = a 3'-end 2'-deoxyribonucleotide-(2,3-dehydro-2,3-deoxyribose 5'-phosphate)-DNA + a 5'-end 5'-phospho-2'-deoxyribonucleoside-DNA + H(+). Its function is as follows. Involved in base excision repair of DNA damaged by oxidation or by mutagenic agents. Acts as a DNA glycosylase that recognizes and removes damaged bases. Has a preference for oxidized purines, such as 7,8-dihydro-8-oxoguanine (8-oxoG). Has AP (apurinic/apyrimidinic) lyase activity and introduces nicks in the DNA strand. Cleaves the DNA backbone by beta-delta elimination to generate a single-strand break at the site of the removed base with both 3'- and 5'-phosphates. This chain is Formamidopyrimidine-DNA glycosylase, found in Mycoplasma mobile (strain ATCC 43663 / 163K / NCTC 11711) (Mesomycoplasma mobile).